The following is a 356-amino-acid chain: DNA polymerase IV (356 aa).

The UmuC domain occupies 7 to 188 (IIHIDMDCFY…LPLKKISGVG (182 aa)). Mg(2+) is bound by residues Asp11 and Asp106. Residue Glu107 is part of the active site.

It belongs to the DNA polymerase type-Y family. Monomer. It depends on Mg(2+) as a cofactor.

The protein localises to the cytoplasm. It carries out the reaction DNA(n) + a 2'-deoxyribonucleoside 5'-triphosphate = DNA(n+1) + diphosphate. Its function is as follows. Poorly processive, error-prone DNA polymerase involved in untargeted mutagenesis. Copies undamaged DNA at stalled replication forks, which arise in vivo from mismatched or misaligned primer ends. These misaligned primers can be extended by PolIV. Exhibits no 3'-5' exonuclease (proofreading) activity. May be involved in translesional synthesis, in conjunction with the beta clamp from PolIII. This chain is DNA polymerase IV, found in Glaesserella parasuis serovar 5 (strain SH0165) (Haemophilus parasuis).